A 184-amino-acid polypeptide reads, in one-letter code: ATP synthase subunit b, chloroplastic (184 aa).

A helical transmembrane segment spans residues 27–49 (LATNPINLSVVLGVLIFFGKGVL).

Belongs to the ATPase B chain family. F-type ATPases have 2 components, F(1) - the catalytic core - and F(0) - the membrane proton channel. F(1) has five subunits: alpha(3), beta(3), gamma(1), delta(1), epsilon(1). F(0) has four main subunits: a(1), b(1), b'(1) and c(10-14). The alpha and beta chains form an alternating ring which encloses part of the gamma chain. F(1) is attached to F(0) by a central stalk formed by the gamma and epsilon chains, while a peripheral stalk is formed by the delta, b and b' chains.

The protein resides in the plastid. It localises to the chloroplast thylakoid membrane. Its function is as follows. F(1)F(0) ATP synthase produces ATP from ADP in the presence of a proton or sodium gradient. F-type ATPases consist of two structural domains, F(1) containing the extramembraneous catalytic core and F(0) containing the membrane proton channel, linked together by a central stalk and a peripheral stalk. During catalysis, ATP synthesis in the catalytic domain of F(1) is coupled via a rotary mechanism of the central stalk subunits to proton translocation. Functionally, component of the F(0) channel, it forms part of the peripheral stalk, linking F(1) to F(0). The protein is ATP synthase subunit b, chloroplastic of Phalaenopsis aphrodite subsp. formosana (Moth orchid).